Consider the following 259-residue polypeptide: MTFPNINPIIFSIGPLAVSWYSLSYVVGILLGWFYANKIIEKFKPQITKKNLEDFITYAVIGIIVGGRLGFVLLYNPSRYFSNPIDILKTYEGGMSFHGGALGVIIAAYLFCRKYKINFLSLTDIIAPVVPIGLFLGRIANFINGELYGRITNSSFGMIFPNSDLMPRHPSQLYEAFFEGLVLFCILAYATFKHKTLKKYGLNSGIFLIFYALFRIAIEIFREPDIQIGFILDSLTMGQILSVPMLLLGSYLICQSNPK.

Transmembrane regions (helical) follow at residues 9–29, 55–75, 92–112, and 117–137; these read IIFS…VVGI, FITY…VLLY, EGGM…YLFC, and INFL…LFLG. Position 138 (Arg-138) interacts with a 1,2-diacyl-sn-glycero-3-phospho-(1'-sn-glycerol). The next 3 membrane-spanning stretches (helical) occupy residues 172-192, 201-221, and 228-248; these read QLYE…YATF, GLNS…IEIF, and IGFI…MLLL.

The protein belongs to the Lgt family.

It is found in the cell inner membrane. It carries out the reaction L-cysteinyl-[prolipoprotein] + a 1,2-diacyl-sn-glycero-3-phospho-(1'-sn-glycerol) = an S-1,2-diacyl-sn-glyceryl-L-cysteinyl-[prolipoprotein] + sn-glycerol 1-phosphate + H(+). It functions in the pathway protein modification; lipoprotein biosynthesis (diacylglyceryl transfer). In terms of biological role, catalyzes the transfer of the diacylglyceryl group from phosphatidylglycerol to the sulfhydryl group of the N-terminal cysteine of a prolipoprotein, the first step in the formation of mature lipoproteins. This is Phosphatidylglycerol--prolipoprotein diacylglyceryl transferase from Rickettsia felis (strain ATCC VR-1525 / URRWXCal2) (Rickettsia azadi).